The following is a 296-amino-acid chain: D-alanine--D-alanine ligase (296 aa).

Positions 103 to 293 (KEILMHYRMP…FDSFVKRIIE (191 aa)) constitute an ATP-grasp domain. Position 129-180 (129-180 (ISFPVAVKPSSGGSSIATFKVKSIQELKHAYEEASKYGEVMIEQWVTGKEIT)) interacts with ATP. Mg(2+) contacts are provided by Asp247, Glu260, and Asn262.

It belongs to the D-alanine--D-alanine ligase family. Mg(2+) serves as cofactor. Requires Mn(2+) as cofactor.

The protein localises to the cytoplasm. The enzyme catalyses 2 D-alanine + ATP = D-alanyl-D-alanine + ADP + phosphate + H(+). It participates in cell wall biogenesis; peptidoglycan biosynthesis. In terms of biological role, cell wall formation. This is D-alanine--D-alanine ligase from Francisella tularensis subsp. tularensis (strain WY96-3418).